The chain runs to 447 residues: NADH-ubiquinone oxidoreductase chain 4 (447 aa).

A run of 13 helical transmembrane segments spans residues 28 to 48 (IFLL…FNYI), 56 to 76 (MVSY…LMAS), 89 to 109 (FVFM…SMSV), 110 to 130 (FMFY…ILGW), 141 to 161 (VYLL…IFYI), 183 to 203 (LLYL…LVHL), 213 to 233 (PVSG…YGLL), 246 to 266 (YNYW…LVCL), 273 to 293 (ALIA…LLTM), 298 to 318 (LTGS…LFCL), 331 to 351 (LLIN…WFLL), 374 to 394 (IVSW…FSAA), and 409 to 431 (YSGV…LHWL).

Belongs to the complex I subunit 4 family.

It is found in the mitochondrion membrane. The enzyme catalyses a ubiquinone + NADH + 5 H(+)(in) = a ubiquinol + NAD(+) + 4 H(+)(out). Functionally, core subunit of the mitochondrial membrane respiratory chain NADH dehydrogenase (Complex I) that is believed to belong to the minimal assembly required for catalysis. Complex I functions in the transfer of electrons from NADH to the respiratory chain. The immediate electron acceptor for the enzyme is believed to be ubiquinone. This Anopheles gambiae (African malaria mosquito) protein is NADH-ubiquinone oxidoreductase chain 4 (mt:ND4).